The sequence spans 150 residues: SsrA-binding protein (150 aa).

The protein belongs to the SmpB family.

It localises to the cytoplasm. Its function is as follows. Required for rescue of stalled ribosomes mediated by trans-translation. Binds to transfer-messenger RNA (tmRNA), required for stable association of tmRNA with ribosomes. tmRNA and SmpB together mimic tRNA shape, replacing the anticodon stem-loop with SmpB. tmRNA is encoded by the ssrA gene; the 2 termini fold to resemble tRNA(Ala) and it encodes a 'tag peptide', a short internal open reading frame. During trans-translation Ala-aminoacylated tmRNA acts like a tRNA, entering the A-site of stalled ribosomes, displacing the stalled mRNA. The ribosome then switches to translate the ORF on the tmRNA; the nascent peptide is terminated with the 'tag peptide' encoded by the tmRNA and targeted for degradation. The ribosome is freed to recommence translation, which seems to be the essential function of trans-translation. The sequence is that of SsrA-binding protein from Thermotoga maritima (strain ATCC 43589 / DSM 3109 / JCM 10099 / NBRC 100826 / MSB8).